Consider the following 282-residue polypeptide: Bacterial lipoprotein FTN_1103 (282 aa).

An N-terminal signal peptide occupies residues 1–28 (MKYGNLMMTKKKLLIGMVTISGIVILGS). A lipid anchor (N-palmitoyl cysteine) is attached at C29. C29 is lipidated: S-diacylglycerol cysteine.

It is found in the cell membrane. In terms of biological role, stimulates the host immune inflammatory signaling system allowing the host to combat the bacteria. Stimulates mouse interleukin-6 (Il6) production. The chain is Bacterial lipoprotein FTN_1103 from Francisella tularensis subsp. novicida (strain U112).